The chain runs to 139 residues: UPF0216 protein MJ1224 (139 aa).

The protein belongs to the UPF0216 family.

The polypeptide is UPF0216 protein MJ1224 (Methanocaldococcus jannaschii (strain ATCC 43067 / DSM 2661 / JAL-1 / JCM 10045 / NBRC 100440) (Methanococcus jannaschii)).